Consider the following 75-residue polypeptide: Kappa-thalatoxin-Tas2a (75 aa).

Residues 1 to 22 (MKFQMIAAVLLIAFCLSVVVTA) form the signal peptide. Residues 23-40 (RMELQDDEEMKNGSFQKR) constitute a propeptide that is removed on maturation. The region spanning 43-75 (CIDTIPKSRCTAFQCKHSMKYRLSFCRKTCGTC) is the ShKT domain. 3 disulfides stabilise this stretch: Cys-43–Cys-75, Cys-52–Cys-68, and Cys-57–Cys-72.

The protein belongs to the sea anemone type 1 potassium channel toxin family. Type 1a subfamily.

Its subcellular location is the secreted. The protein localises to the nematocyst. Its function is as follows. Inhibits voltage-gated potassium channels (Kv) with higher potency for Kv1.1/KCNA1 and Kv1.3/KCNA3 (IC(50)=3.4 nM). The chain is Kappa-thalatoxin-Tas2a from Thalassianthus aster (Fuzzy-tipped anemone).